A 172-amino-acid chain; its full sequence is 3-hydroxydecanoyl-[acyl-carrier-protein] dehydratase (172 aa).

His71 is a catalytic residue.

This sequence belongs to the thioester dehydratase family. FabA subfamily. In terms of assembly, homodimer.

Its subcellular location is the cytoplasm. It carries out the reaction a (3R)-hydroxyacyl-[ACP] = a (2E)-enoyl-[ACP] + H2O. The catalysed reaction is (3R)-hydroxydecanoyl-[ACP] = (2E)-decenoyl-[ACP] + H2O. It catalyses the reaction (2E)-decenoyl-[ACP] = (3Z)-decenoyl-[ACP]. Its pathway is lipid metabolism; fatty acid biosynthesis. Its function is as follows. Necessary for the introduction of cis unsaturation into fatty acids. Catalyzes the dehydration of (3R)-3-hydroxydecanoyl-ACP to E-(2)-decenoyl-ACP and then its isomerization to Z-(3)-decenoyl-ACP. Can catalyze the dehydratase reaction for beta-hydroxyacyl-ACPs with saturated chain lengths up to 16:0, being most active on intermediate chain length. In Vibrio cholerae serotype O1 (strain ATCC 39541 / Classical Ogawa 395 / O395), this protein is 3-hydroxydecanoyl-[acyl-carrier-protein] dehydratase.